The following is a 352-amino-acid chain: MQFVYDPLPYRVIFGAGSVRRVADELSHVGSRALVLSTPEQAGSAQELAATLGDKAVGLFSKAVMHVPVATVDAAAAVARELDADCTVAIGGGSTVGLAKALSLRLDLPSLVVPTTYAGSEVTPIWGLTEDGIKTTGRDKKVLPKVVVYDPDLTLSLPAEMSIASGLNAIAHAMEGLYAFDGNPIVSLMAEESIRALARSLPLIKADPTDAKARGDALYGCWLAGSVLGAASVALHHKLCHTLGGTFDMPHAQTHTAVLPHAIAYNAPSVPEAMERASRALGGGDPATKLYELAVGLGAEMSLAKLGMPKDGIAKAAALAVANPYPNPRPITEEGIVQLLSRAVEGLPPITA.

Residues 93-94 (GS) and 115-119 (TTYAG) each bind NAD(+).

It belongs to the iron-containing alcohol dehydrogenase family. The cofactor is The maleylacetate reductase family of enzymes does not require any metal ion for activity, despite being related to the family III metal-dependent polyol dehydrogenases..

The catalysed reaction is 3-oxoadipate + NAD(+) = maleylacetate + NADH + H(+). The protein operates within xenobiotic degradation; gamma-hexachlorocyclohexane degradation. Functionally, catalyzes the NADH-dependent reduction of maleylacetate to beta-ketoadipate, a step in the degradation of gamma-hexachlorocyclohexane (gamma-HCH or lindane). Has an essential role in this assimilation pathway that allows S.japonicum UT26 to grow on gamma-HCH as the sole source of carbon and energy. The protein is Maleylacetate reductase of Sphingobium indicum (strain DSM 16413 / CCM 7287 / MTCC 6362 / UT26 / NBRC 101211 / UT26S) (Sphingobium japonicum).